We begin with the raw amino-acid sequence, 115 residues long: T cell receptor beta variable 11-2 (115 aa).

An N-terminal signal peptide occupies residues 1–21 (MGTRLLCWAALCLLGAELTEA). The 94-residue stretch at 22–115 (GVAQSPRYKI…SAVYLCASSL (94 aa)) folds into the Ig-like domain. Cys-42 and Cys-111 are oxidised to a cystine.

As to quaternary structure, alpha-beta TR is a heterodimer composed of an alpha and beta chain; disulfide-linked. The alpha-beta TR is associated with the transmembrane signaling CD3 coreceptor proteins to form the TR-CD3 (TcR or TCR). The assembly of alpha-beta TR heterodimers with CD3 occurs in the endoplasmic reticulum where a single alpha-beta TR heterodimer associates with one CD3D-CD3E heterodimer, one CD3G-CD3E heterodimer and one CD247 homodimer forming a stable octameric structure. CD3D-CD3E and CD3G-CD3E heterodimers preferentially associate with TR alpha and TR beta chains, respectively. The association of the CD247 homodimer is the last step of TcR assembly in the endoplasmic reticulum and is required for transport to the cell surface.

It localises to the cell membrane. V region of the variable domain of T cell receptor (TR) beta chain that participates in the antigen recognition. Alpha-beta T cell receptors are antigen specific receptors which are essential to the immune response and are present on the cell surface of T lymphocytes. Recognize peptide-major histocompatibility (MH) (pMH) complexes that are displayed by antigen presenting cells (APC), a prerequisite for efficient T cell adaptive immunity against pathogens. Binding of alpha-beta TR to pMH complex initiates TR-CD3 clustering on the cell surface and intracellular activation of LCK that phosphorylates the ITAM motifs of CD3G, CD3D, CD3E and CD247 enabling the recruitment of ZAP70. In turn ZAP70 phosphorylates LAT, which recruits numerous signaling molecules to form the LAT signalosome. The LAT signalosome propagates signal branching to three major signaling pathways, the calcium, the mitogen-activated protein kinase (MAPK) kinase and the nuclear factor NF-kappa-B (NF-kB) pathways, leading to the mobilization of transcription factors that are critical for gene expression and essential for T cell growth and differentiation. The T cell repertoire is generated in the thymus, by V-(D)-J rearrangement. This repertoire is then shaped by intrathymic selection events to generate a peripheral T cell pool of self-MH restricted, non-autoaggressive T cells. Post-thymic interaction of alpha-beta TR with the pMH complexes shapes TR structural and functional avidity. This is T cell receptor beta variable 11-2 from Homo sapiens (Human).